Consider the following 786-residue polypeptide: E3 ubiquitin-protein ligase UHRF1 (786 aa).

In terms of domain architecture, Ubiquitin-like spans 1–78 (MWIQVRTMDG…IQLLVRQSLV (78 aa)). Phosphoserine occurs at positions 76, 98, and 102. The segment at 82-134 (PVPSSSGGSKERDSELSDTDSGCGLAQSESDKSSNSGEAANEPEGKADEDECD) is disordered. Tudor-like stretches follow at residues 139–213 (GLYK…ARAR) and 220–287 (DLQV…IERP). A Glycyl lysine isopeptide (Lys-Gly) (interchain with G-Cter in SUMO2) cross-link involves residue Lys-283. The linker stretch occupies residues 300–305 (RKSGPS). Ser-302 carries the post-translational modification Phosphoserine; by PKA. Residues 303 to 370 (GPSCKHCKDD…EWYCPDCRID (68 aa)) form a PHD-type zinc finger. Histone H3R2me0 binding stretches follow at residues 337-341 (CDECD) and 357-359 (PPE). Phosphoserine is present on Ser-372. Lys-389 participates in a covalent cross-link: Glycyl lysine isopeptide (Lys-Gly) (interchain with G-Cter in SUMO2). Position 403 is an N6-acetyllysine (Lys-403). Residues 423-586 (GPIPGIPVGT…FLVWRFLLRR (164 aa)) enclose the YDG domain. A required to promote base flipping region spans residues 449–450 (HV). DNA is bound by residues 467–468 (AG) and Asp-473. Required for formation of a 5-methylcytosine-binding pocket stretches follow at residues 470–473 (YEDD) and 482–485 (YTGS). At Lys-550 the chain carries N6-acetyllysine; alternate. Lys-550 participates in a covalent cross-link: Glycyl lysine isopeptide (Lys-Gly) (interchain with G-Cter in SUMO2); alternate. Positions 626–679 (NSKQAALDKEEEDGEEGFTSPRKGKRKSKSAGGDGSSRGTPKKTKVEPYSLTTQ) are disordered. A Phosphoserine; by CDK1 modification is found at Ser-645. Residues Ser-655 and Ser-662 each carry the phosphoserine modification. Lys-670 is covalently cross-linked (Glycyl lysine isopeptide (Lys-Gly) (interchain with G-Cter in SUMO2)). Residues 717–756 (CICCQELVFRPITTVCQHNVCKDCLDRSFKAQVFSCPACR) form an RING-type zinc finger.

As to quaternary structure, interacts with DNMT3A and DNMT3B. Interacts with DNMT1; the interaction is direct. Interacts with USP7; leading to its deubiquitination. Interacts with histone H3. Interacts with HDAC1, but not with HDAC2. Interacts with BLTP3A. Interacts with PML. Interacts with EHMT2. Binds methylated CpG containing oligonucleotides. Interacts with ZNF263; recruited to the SIX3 promoter along with other proteins involved in chromatin modification and transcriptional corepression where it contributes to transcriptional repression. Interacts with UHRF2. Interacts with FANCD2. Interacts with TET1 isoform 2; this interaction induces the recruitment of TET1 isoform 2 to replicating heterochromatin. Post-translationally, phosphorylation at Ser-302 of the linker region decreases the binding to H3K9me3. Phosphorylation at Ser-645 by CDK1 during M phase impairs interaction with USP7, preventing deubiquitination and leading to degradation by the proteasome. In terms of processing, ubiquitinated; which leads to proteasomal degradation. Autoubiquitinated; interaction with USP7 leads to deubiquitination and prevents degradation. Ubiquitination and degradation takes place during M phase, when phosphorylation at Ser-645 prevents interaction with USP7 and subsequent deubiquitination. Polyubiquitination may be stimulated by DNA damage.

The protein resides in the nucleus. It catalyses the reaction S-ubiquitinyl-[E2 ubiquitin-conjugating enzyme]-L-cysteine + [acceptor protein]-L-lysine = [E2 ubiquitin-conjugating enzyme]-L-cysteine + N(6)-ubiquitinyl-[acceptor protein]-L-lysine.. It functions in the pathway protein modification; protein ubiquitination. In terms of biological role, multidomain protein that acts as a key epigenetic regulator by bridging DNA methylation and chromatin modification. Specifically recognizes and binds hemimethylated DNA at replication forks via its YDG domain and recruits DNMT1 methyltransferase to ensure faithful propagation of the DNA methylation patterns through DNA replication. In addition to its role in maintenance of DNA methylation, also plays a key role in chromatin modification: through its tudor-like regions and PHD-type zinc fingers, specifically recognizes and binds histone H3 trimethylated at 'Lys-9' (H3K9me3) and unmethylated at 'Arg-2' (H3R2me0), respectively, and recruits chromatin proteins. Enriched in pericentric heterochromatin where it recruits different chromatin modifiers required for this chromatin replication. Also localizes to euchromatic regions where it negatively regulates transcription possibly by impacting DNA methylation and histone modifications. Has E3 ubiquitin-protein ligase activity by mediating the ubiquitination of target proteins such as histone H3 and PML. It is still unclear how E3 ubiquitin-protein ligase activity is related to its role in chromatin in vivo. Plays a role in DNA repair by cooperating with UHRF2 to ensure recruitment of FANCD2 to interstrand cross-links (ICLs) leading to FANCD2 activation. Plays a pivotal role in the establishment of correct spindle architecture by catalyzing the 'Lys-63'-linked ubiquitination of KIF11, thereby controlling KIF11 localization on the spindle. The chain is E3 ubiquitin-protein ligase UHRF1 (UHRF1) from Bos taurus (Bovine).